A 196-amino-acid polypeptide reads, in one-letter code: 3-isopropylmalate dehydratase small subunit (196 aa).

It belongs to the LeuD family. LeuD type 1 subfamily. Heterodimer of LeuC and LeuD.

The enzyme catalyses (2R,3S)-3-isopropylmalate = (2S)-2-isopropylmalate. It functions in the pathway amino-acid biosynthesis; L-leucine biosynthesis; L-leucine from 3-methyl-2-oxobutanoate: step 2/4. In terms of biological role, catalyzes the isomerization between 2-isopropylmalate and 3-isopropylmalate, via the formation of 2-isopropylmaleate. The sequence is that of 3-isopropylmalate dehydratase small subunit from Herpetosiphon aurantiacus (strain ATCC 23779 / DSM 785 / 114-95).